The chain runs to 539 residues: GMP synthase [glutamine-hydrolyzing] (539 aa).

The Glutamine amidotransferase type-1 domain occupies 4-203 (KILILDFGSQ…VHDICGCKSD (200 aa)). Cys82 functions as the Nucleophile in the catalytic mechanism. Residues His177 and Glu179 contribute to the active site. A GMPS ATP-PPase domain is found at 204-395 (WNMPDYIAEA…LGLPHDMVYR (192 aa)). 231–237 (SGGVDSS) serves as a coordination point for ATP.

As to quaternary structure, homodimer.

It catalyses the reaction XMP + L-glutamine + ATP + H2O = GMP + L-glutamate + AMP + diphosphate + 2 H(+). It participates in purine metabolism; GMP biosynthesis; GMP from XMP (L-Gln route): step 1/1. Its function is as follows. Catalyzes the synthesis of GMP from XMP. This Janthinobacterium sp. (strain Marseille) (Minibacterium massiliensis) protein is GMP synthase [glutamine-hydrolyzing].